The following is a 902-amino-acid chain: HTH-type transcriptional regulator MalT (902 aa).

ATP is bound at residue 39–46 (SPAGYGKT). Residues 832–897 (ELVRTSPLTQ…EAVQTAEQLL (66 aa)) form the HTH luxR-type domain. A DNA-binding region (H-T-H motif) is located at residues 856-875 (NEQIAHELDVAGTTIKTHIR).

The protein belongs to the MalT family. Monomer in solution. Oligomerizes to an active state in the presence of the positive effectors ATP and maltotriose.

Activated by ATP and maltotriose, which are both required for DNA binding. In terms of biological role, positively regulates the transcription of the maltose regulon whose gene products are responsible for uptake and catabolism of malto-oligosaccharides. Specifically binds to the promoter region of its target genes, recognizing a short DNA motif called the MalT box. The chain is HTH-type transcriptional regulator MalT from Vibrio cholerae serotype O1 (strain ATCC 39315 / El Tor Inaba N16961).